Here is a 371-residue protein sequence, read N- to C-terminus: tRNA-specific 2-thiouridylase MnmA (371 aa).

ATP is bound by residues 8–15 (GMSGGVDS) and Met34. The interval 94–96 (NPD) is interaction with target base in tRNA. Cys99 serves as the catalytic Nucleophile. An intrachain disulfide couples Cys99 to Cys195. Gly123 serves as a coordination point for ATP. An interaction with tRNA region spans residues 145 to 147 (KDQ). The active-site Cysteine persulfide intermediate is Cys195. The segment at 309-310 (RY) is interaction with tRNA.

This sequence belongs to the MnmA/TRMU family.

The protein localises to the cytoplasm. The enzyme catalyses S-sulfanyl-L-cysteinyl-[protein] + uridine(34) in tRNA + AH2 + ATP = 2-thiouridine(34) in tRNA + L-cysteinyl-[protein] + A + AMP + diphosphate + H(+). Its function is as follows. Catalyzes the 2-thiolation of uridine at the wobble position (U34) of tRNA, leading to the formation of s(2)U34. The sequence is that of tRNA-specific 2-thiouridylase MnmA from Methylococcus capsulatus (strain ATCC 33009 / NCIMB 11132 / Bath).